The chain runs to 307 residues: Aspartate carbamoyltransferase catalytic subunit (307 aa).

Carbamoyl phosphate contacts are provided by arginine 54 and threonine 55. Position 83 (lysine 83) interacts with L-aspartate. Positions 104, 132, and 135 each coordinate carbamoyl phosphate. 2 residues coordinate L-aspartate: arginine 165 and arginine 228. The carbamoyl phosphate site is built by leucine 267 and proline 268.

Belongs to the aspartate/ornithine carbamoyltransferase superfamily. ATCase family. In terms of assembly, heterododecamer (2C3:3R2) of six catalytic PyrB chains organized as two trimers (C3), and six regulatory PyrI chains organized as three dimers (R2).

It carries out the reaction carbamoyl phosphate + L-aspartate = N-carbamoyl-L-aspartate + phosphate + H(+). It functions in the pathway pyrimidine metabolism; UMP biosynthesis via de novo pathway; (S)-dihydroorotate from bicarbonate: step 2/3. Catalyzes the condensation of carbamoyl phosphate and aspartate to form carbamoyl aspartate and inorganic phosphate, the committed step in the de novo pyrimidine nucleotide biosynthesis pathway. The polypeptide is Aspartate carbamoyltransferase catalytic subunit (Clostridium botulinum (strain Langeland / NCTC 10281 / Type F)).